A 259-amino-acid polypeptide reads, in one-letter code: DNA repair protein RecO (259 aa).

Belongs to the RecO family.

Functionally, involved in DNA repair and RecF pathway recombination. The sequence is that of DNA repair protein RecO from Rhizobium rhizogenes (strain K84 / ATCC BAA-868) (Agrobacterium radiobacter).